Here is a 167-residue protein sequence, read N- to C-terminus: CGG triplet repeat-binding protein 1 (167 aa).

Serine 56 carries the phosphoserine modification. Positions 80 to 84 (RKKQR) match the Nuclear localization signal motif. Phosphoserine is present on serine 164.

In terms of tissue distribution, ubiquitous. Highly expressed in placenta, thymus, lymph nodes, cerebellum and cerebral cortex. Low expression in other regions of the brain.

Its subcellular location is the nucleus. In terms of biological role, binds to nonmethylated 5'-d(CGG)(n)-3' trinucleotide repeats in the FMR1 promoter. May play a role in regulating FMR1 promoter. This is CGG triplet repeat-binding protein 1 (CGGBP1) from Homo sapiens (Human).